Here is a 61-residue protein sequence, read N- to C-terminus: Large ribosomal subunit protein eL37 (61 aa).

The Zn(2+) site is built by cysteine 20, cysteine 23, cysteine 35, and cysteine 38. Residues 20–38 form a C4-type zinc finger; sequence CPRCGRHSYNIVKGYCAAC.

This sequence belongs to the eukaryotic ribosomal protein eL37 family. Zn(2+) is required as a cofactor.

Functionally, binds to the 23S rRNA. The protein is Large ribosomal subunit protein eL37 of Caldivirga maquilingensis (strain ATCC 700844 / DSM 13496 / JCM 10307 / IC-167).